The primary structure comprises 89 residues: Small ribosomal subunit protein uS15 (89 aa).

This sequence belongs to the universal ribosomal protein uS15 family. In terms of assembly, part of the 30S ribosomal subunit. Forms a bridge to the 50S subunit in the 70S ribosome, contacting the 23S rRNA.

In terms of biological role, one of the primary rRNA binding proteins, it binds directly to 16S rRNA where it helps nucleate assembly of the platform of the 30S subunit by binding and bridging several RNA helices of the 16S rRNA. Its function is as follows. Forms an intersubunit bridge (bridge B4) with the 23S rRNA of the 50S subunit in the ribosome. In Burkholderia ambifaria (strain MC40-6), this protein is Small ribosomal subunit protein uS15.